Consider the following 668-residue polypeptide: Methionine--tRNA ligase (668 aa).

The 'HIGH' region motif lies at 11–21 (AYTNGPLHIGH). Zn(2+) is bound by residues Cys146, Cys149, Cys159, and Cys162. A 'KMSKS' region motif is present at residues 332–336 (KMSTS). Thr335 provides a ligand contact to ATP. One can recognise a tRNA-binding domain in the interval 567 to 668 (EFNRLDLRVG…REVEPGERIR (102 aa)).

Belongs to the class-I aminoacyl-tRNA synthetase family. MetG type 1 subfamily. In terms of assembly, homodimer. Requires Zn(2+) as cofactor.

The protein resides in the cytoplasm. The enzyme catalyses tRNA(Met) + L-methionine + ATP = L-methionyl-tRNA(Met) + AMP + diphosphate. Its function is as follows. Is required not only for elongation of protein synthesis but also for the initiation of all mRNA translation through initiator tRNA(fMet) aminoacylation. The protein is Methionine--tRNA ligase of Methanopyrus kandleri (strain AV19 / DSM 6324 / JCM 9639 / NBRC 100938).